An 82-amino-acid polypeptide reads, in one-letter code: ATP synthase subunit c (82 aa).

The next 2 membrane-spanning stretches (helical) occupy residues 18-38 and 61-81; these read LGEALGAGLAVIGAGLGIGKI and IIAAALVEGVSLFAVVVCGFL.

Belongs to the ATPase C chain family. As to quaternary structure, F-type ATPases have 2 components, F(1) - the catalytic core - and F(0) - the membrane proton channel. F(1) has five subunits: alpha(3), beta(3), gamma(1), delta(1), epsilon(1). F(0) has three main subunits: a(1), b(2) and c(10-14). The alpha and beta chains form an alternating ring which encloses part of the gamma chain. F(1) is attached to F(0) by a central stalk formed by the gamma and epsilon chains, while a peripheral stalk is formed by the delta and b chains.

The protein localises to the cell inner membrane. Its function is as follows. F(1)F(0) ATP synthase produces ATP from ADP in the presence of a proton or sodium gradient. F-type ATPases consist of two structural domains, F(1) containing the extramembraneous catalytic core and F(0) containing the membrane proton channel, linked together by a central stalk and a peripheral stalk. During catalysis, ATP synthesis in the catalytic domain of F(1) is coupled via a rotary mechanism of the central stalk subunits to proton translocation. Functionally, key component of the F(0) channel; it plays a direct role in translocation across the membrane. A homomeric c-ring of between 10-14 subunits forms the central stalk rotor element with the F(1) delta and epsilon subunits. This Azobacteroides pseudotrichonymphae genomovar. CFP2 protein is ATP synthase subunit c.